A 1034-amino-acid polypeptide reads, in one-letter code: Potassium-transporting ATPase alpha chain 1 (1034 aa).

Residues 2-97 (GKAENYELYQ…NALRPPRGTP (96 aa)) are Cytoplasmic-facing. Residues Y7 and Y10 each carry the phosphotyrosine modification. The disordered stretch occupies residues 13 to 40 (ELGPGPSGDMAAKMSKKKAGRGGGKRKE). Positions 26–39 (MSKKKAGRGGGKRK) are enriched in basic residues. A Phosphoserine; by PKA and PKC modification is found at S27. The helical transmembrane segment at 98–118 (EYVKFARQLAGGLQCLMWVAA) threads the bilayer. The Lumenal portion of the chain corresponds to 119 to 141 (AICLIAFAIQASEGDLTTDDNLY). A helical membrane pass occupies residues 142-162 (LALALIAVVVVTGCFGYYQEF). Residues 163-298 (KSTNIIASFK…NEKTPIAIEI (136 aa)) are Cytoplasmic-facing. The tract at residues 222 to 244 (KVDNSSLTGESEPQTRSPECTHE) is disordered. Polar residues predominate over residues 225-239 (NSSLTGESEPQTRSP). A helical membrane pass occupies residues 299–318 (EHFVDIIAGLAILFGATFFI). Topologically, residues 319–330 (VAMCIGYTFLRA) are lumenal. Residues 331-348 (MVFFMAIVVAYVPEGLLA) form a helical membrane-spanning segment. Residues V339, A340, V342, and E344 each contribute to the K(+) site. Topologically, residues 349 to 782 (TVTVCLSLTA…EQGRLIFDNL (434 aa)) are cytoplasmic. Catalysis depends on D386, which acts as the 4-aspartylphosphate intermediate. Mg(2+)-binding residues include D386 and T388. Phosphoserine occurs at positions 462 and 600. Mg(2+)-binding residues include D727 and D731. The helical transmembrane segment at 783-802 (KKSIAYTLTKNIPELTPYLI) threads the bilayer. E796 contacts K(+). Topologically, residues 803–812 (YITVSVPLPL) are lumenal. The helical transmembrane segment at 813–833 (GCITILFIELCTDIFPSVSLA) threads the bilayer. E821 provides a ligand contact to K(+). Over 834–853 (YEKAESDIMHLRPRNPKRDR) the chain is Cytoplasmic. The residue at position 839 (S839) is a Phosphoserine. The chain crosses the membrane as a helical span at residues 854–876 (LVNEPLAAYSYFQIGAIQSFAGF). Over 877-928 (TDYFTAMAQEGWFPLLCVGLRPQWENHHLQDLQDSYGQEWTFGQRLYQQYTC) the chain is Lumenal. Residues 929 to 948 (YTVFFISIEMCQIADVLIRK) traverse the membrane as a helical segment. The Cytoplasmic segment spans residues 949–962 (TRRLSAFQQGFFRN). Residue S953 is modified to Phosphoserine; by PKA. A helical membrane pass occupies residues 963–981 (RILVIAIVFQVCIGCFLCY). The Lumenal segment spans residues 982-996 (CPGMPNIFNFMPIRF). The helical transmembrane segment at 997–1017 (QWWLVPMPFGLLIFVYDEIRK) threads the bilayer. Topologically, residues 1018 to 1034 (LGVRCCPGSWWDQELYY) are cytoplasmic.

It belongs to the cation transport ATPase (P-type) (TC 3.A.3) family. Type IIC subfamily. In terms of assembly, the gastric H(+)/K(+) ATPase pump is composed of the catalytic alpha subunit ATP4A and the regulatory beta subunit ATP4B. Interacts (via the P-domain) with ATP4B (via N-terminus); this interaction stabilizes the lumenal-open E2 conformation state and prevents the reverse reaction of the transport cycle.

It is found in the apical cell membrane. Its subcellular location is the cell membrane. The enzyme catalyses K(+)(out) + ATP + H2O + H(+)(in) = K(+)(in) + ADP + phosphate + 2 H(+)(out). Down-regulated by K(+)-competitive acid blockers (P-CABs) such as vonoprazan. In terms of biological role, the catalytic subunit of the gastric H(+)/K(+) ATPase pump which transports H(+) ions in exchange for K(+) ions across the apical membrane of parietal cells. Uses ATP as an energy source to pump H(+) ions to the gastric lumen while transporting K(+) ion from the lumen into the cell. Remarkably generates a million-fold proton gradient across the gastric parietal cell membrane, acidifying the gastric juice down to pH 1. Within a transport cycle, the transfer of a H(+) ion across the membrane is coupled to ATP hydrolysis and is associated with a transient phosphorylation that shifts the pump conformation from inward-facing (E1) to outward-facing state (E2). The release of the H(+) ion in the stomach lumen is followed by binding of K(+) ion converting the pump conformation back to the E1 state. In Sus scrofa (Pig), this protein is Potassium-transporting ATPase alpha chain 1 (ATP4A).